The chain runs to 133 residues: ATP synthase epsilon chain, chloroplastic (133 aa).

This sequence belongs to the ATPase epsilon chain family. F-type ATPases have 2 components, CF(1) - the catalytic core - and CF(0) - the membrane proton channel. CF(1) has five subunits: alpha(3), beta(3), gamma(1), delta(1), epsilon(1). CF(0) has three main subunits: a, b and c.

It localises to the plastid. It is found in the chloroplast thylakoid membrane. Produces ATP from ADP in the presence of a proton gradient across the membrane. This is ATP synthase epsilon chain, chloroplastic from Mesostigma viride (Green alga).